Reading from the N-terminus, the 561-residue chain is Nephronectin (561 aa).

A signal peptide spans 1-19; it reads MAVLLAAVLASSLYLQVAA. Residues 52 to 87 form the EGF-like 1 domain; that stretch reads SWGQCQPVCQPQCKHGECVGPNKCKCHPGFAGKTCN. 6 disulfide bridges follow: cysteine 56–cysteine 69, cysteine 60–cysteine 75, cysteine 77–cysteine 86, cysteine 93–cysteine 104, cysteine 100–cysteine 113, and cysteine 115–cysteine 127. The region spanning 89-128 is the EGF-like 2; calcium-binding domain; sequence DLNECGLKPRPCKHRCMNTFGSYKCYCLNGYMLLPDGSCS. Residues 132–168 enclose the EGF-like 3 domain; the sequence is SCSMANCQYGCDVVKGQVRCQCPSPGLQLAPDGRTCV. Residues 169–213 form the EGF-like 4; calcium-binding domain; that stretch reads DIDECATGRVSCPRFRQCVNTFGSYICKCHTGFDLMYIGGKYQCH. Cystine bridges form between cysteine 173–cysteine 186, cysteine 180–cysteine 195, cysteine 197–cysteine 212, cysteine 218–cysteine 231, cysteine 225–cysteine 240, and cysteine 242–cysteine 253. Residues 214-254 form the EGF-like 5; calcium-binding domain; that stretch reads DIDECSLGQHQCSSYARCYNIHGSYKCQCRDGYEGDGLNCV. The tract at residues 266–370 is disordered; that stretch reads PIHMPERNGT…TSTTTRVITV (105 aa). Low complexity predominate over residues 307–316; sequence TNRPTSKPTT. Over residues 317 to 348 the composition is skewed to pro residues; sequence RPTPNPTPQPTPPPPPPLPTEPRTTPLPPTPE. Residues 352–366 show a composition bias toward low complexity; sequence TRPTTIAPATSTTTR. An Integrin interaction motif is present at residues 382–384; sequence RGD. The 142-residue stretch at 420 to 561 folds into the MAM domain; it reads HSCNFDHGLC…DDVSLKRGRC (142 aa).

Belongs to the nephronectin family. As to quaternary structure, homodimer and homotrimer. In terms of tissue distribution, expressed in kidney (at protein level).

The protein localises to the secreted. Its subcellular location is the extracellular space. It is found in the extracellular matrix. Functional ligand of integrin alpha-8/beta-1 in kidney development. Regulates the expression of GDNF with integrin alpha-8/beta-1 which is essential for kidney development. May also play a role in the development and function of various tissues, regulating cell adhesion, spreading and survival through the binding of several integrins. The polypeptide is Nephronectin (Npnt) (Mus musculus (Mouse)).